A 413-amino-acid polypeptide reads, in one-letter code: Terephthalate 1,2-dioxygenase, terminal oxygenase component subunit alpha 2 (413 aa).

The Rieske domain maps to 41-144 (NYLCLESEIP…CKEEHGPRKL (104 aa)). [2Fe-2S] cluster contacts are provided by Cys82, His84, Cys102, and His105.

Belongs to the bacterial ring-hydroxylating dioxygenase alpha subunit family. As to quaternary structure, heterotetramer composed of 2 alpha (TphA2I and TphA2II) and 2 beta (TphA3I and TphA3II) subunits. Part of a multicomponent enzyme system composed of a reductase (TphA1I or TphA1II) and a two-subunit oxygenase component (TphA2I or TphA2II and TphA3I or TphA3II). The cofactor is Fe cation. [2Fe-2S] cluster serves as cofactor.

The catalysed reaction is terephthalate + NADH + O2 + H(+) = (3S,4R)-3,4-dihydroxycyclohexa-1,5-diene-1,4-dicarboxylate + NAD(+). With respect to regulation, inhibited by EDTA. In terms of biological role, component of the terephthalate 1,2-dioxygenase multicomponent enzyme system which catalyzes the dioxygenation of terephthalate (TER/TPA) to 1,2-dihydroxy-3,5-cyclohexadiene-1,4-dicarboxylic acid (DCD). It can also use 2,5-dicarboxypyridine (PDC) and 1,4-napthalenedicarboxylic acid (NDC) as substrates, and preferentially uses NADPH which is the physiological electron donor. The sequence is that of Terephthalate 1,2-dioxygenase, terminal oxygenase component subunit alpha 2 (tphA2II) from Comamonas sp.